Here is a 254-residue protein sequence, read N- to C-terminus: uncharacterized protein (254 aa).

It belongs to the methyltransferase superfamily.

This is an uncharacterized protein from Mycobacterium tuberculosis (strain ATCC 25177 / H37Ra).